The chain runs to 180 residues: ATP synthase subunit delta (180 aa).

Belongs to the ATPase delta chain family. In terms of assembly, F-type ATPases have 2 components, F(1) - the catalytic core - and F(0) - the membrane proton channel. F(1) has five subunits: alpha(3), beta(3), gamma(1), delta(1), epsilon(1). F(0) has three main subunits: a(1), b(2) and c(10-14). The alpha and beta chains form an alternating ring which encloses part of the gamma chain. F(1) is attached to F(0) by a central stalk formed by the gamma and epsilon chains, while a peripheral stalk is formed by the delta and b chains.

The protein resides in the cell membrane. F(1)F(0) ATP synthase produces ATP from ADP in the presence of a proton or sodium gradient. F-type ATPases consist of two structural domains, F(1) containing the extramembraneous catalytic core and F(0) containing the membrane proton channel, linked together by a central stalk and a peripheral stalk. During catalysis, ATP synthesis in the catalytic domain of F(1) is coupled via a rotary mechanism of the central stalk subunits to proton translocation. Its function is as follows. This protein is part of the stalk that links CF(0) to CF(1). It either transmits conformational changes from CF(0) to CF(1) or is implicated in proton conduction. The chain is ATP synthase subunit delta from Leuconostoc mesenteroides subsp. mesenteroides (strain ATCC 8293 / DSM 20343 / BCRC 11652 / CCM 1803 / JCM 6124 / NCDO 523 / NBRC 100496 / NCIMB 8023 / NCTC 12954 / NRRL B-1118 / 37Y).